The chain runs to 514 residues: 2,3-bisphosphoglycerate-independent phosphoglycerate mutase (514 aa).

Mn(2+) contacts are provided by Asp14 and Ser64. The active-site Phosphoserine intermediate is Ser64. Residues His125, 155–156 (RD), Arg187, Arg193, 263–266 (RADR), and Lys336 contribute to the substrate site. Asp403, His407, Asp444, His445, and His463 together coordinate Mn(2+).

It belongs to the BPG-independent phosphoglycerate mutase family. Monomer. The cofactor is Mn(2+).

The catalysed reaction is (2R)-2-phosphoglycerate = (2R)-3-phosphoglycerate. It participates in carbohydrate degradation; glycolysis; pyruvate from D-glyceraldehyde 3-phosphate: step 3/5. Its function is as follows. Catalyzes the interconversion of 2-phosphoglycerate and 3-phosphoglycerate. The sequence is that of 2,3-bisphosphoglycerate-independent phosphoglycerate mutase from Shewanella denitrificans (strain OS217 / ATCC BAA-1090 / DSM 15013).